Consider the following 152-residue polypeptide: MFRGATLVNLDSKGRLSVPTRYREQLLENAAGQMVCTIDIHHPCLLLYPLPEWEIIEQKLSRLLSMNPVERRVQRLLLGHASECQMDGAGRLLIAPVLRQHAGLTKEVMLVGQFNKFELWDETTWHQQVKEDIDAEQLATGDLSERLQDLSL.

2 SpoVT-AbrB domains span residues 5-52 (ATLV…PLPE) and 81-124 (ASEC…DETT).

Belongs to the MraZ family. As to quaternary structure, forms oligomers.

Its subcellular location is the cytoplasm. It is found in the nucleoid. Negatively regulates its own expression and that of the subsequent genes in the proximal part of the division and cell wall (dcw) gene cluster. Acts by binding directly to DNA. May also regulate the expression of genes outside the dcw cluster. This is Transcriptional regulator MraZ from Shigella flexneri serotype 5b (strain 8401).